The chain runs to 671 residues: DNA ligase (671 aa).

NAD(+) contacts are provided by residues 32 to 36, 81 to 82, and E113; these read DAEYD and SL. Catalysis depends on K115, which acts as the N6-AMP-lysine intermediate. Positions 136, 173, 290, and 314 each coordinate NAD(+). Positions 408, 411, 426, and 432 each coordinate Zn(2+). A BRCT domain is found at 593–671; that stretch reads EIDSPFAGKT…EAEMIRLLGA (79 aa).

It belongs to the NAD-dependent DNA ligase family. LigA subfamily. Mg(2+) is required as a cofactor. Requires Mn(2+) as cofactor.

The enzyme catalyses NAD(+) + (deoxyribonucleotide)n-3'-hydroxyl + 5'-phospho-(deoxyribonucleotide)m = (deoxyribonucleotide)n+m + AMP + beta-nicotinamide D-nucleotide.. Functionally, DNA ligase that catalyzes the formation of phosphodiester linkages between 5'-phosphoryl and 3'-hydroxyl groups in double-stranded DNA using NAD as a coenzyme and as the energy source for the reaction. It is essential for DNA replication and repair of damaged DNA. In Salmonella dublin (strain CT_02021853), this protein is DNA ligase.